Here is a 192-residue protein sequence, read N- to C-terminus: Segregation and condensation protein B (192 aa).

It belongs to the ScpB family. In terms of assembly, homodimer. Homodimerization may be required to stabilize the binding of ScpA to the Smc head domains. Component of a cohesin-like complex composed of ScpA, ScpB and the Smc homodimer, in which ScpA and ScpB bind to the head domain of Smc. The presence of the three proteins is required for the association of the complex with DNA.

It localises to the cytoplasm. Participates in chromosomal partition during cell division. May act via the formation of a condensin-like complex containing Smc and ScpA that pull DNA away from mid-cell into both cell halves. The sequence is that of Segregation and condensation protein B from Mycoplasma mobile (strain ATCC 43663 / 163K / NCTC 11711) (Mesomycoplasma mobile).